The sequence spans 148 residues: Snaclec B1 (148 aa).

The signal sequence occupies residues 1-24; sequence MGRIIFVSFGLLVVFLSLSGTGAA. 3 cysteine pairs are disulfide-bonded: cysteine 27/cysteine 38, cysteine 55/cysteine 144, and cysteine 121/cysteine 136. Residues 34 to 145 enclose the C-type lectin domain; that stretch reads YDQHCYKVFD…CRLLGHFVCK (112 aa).

It belongs to the snaclec family. In terms of assembly, heterodimer; disulfide-linked. As to expression, expressed by the venom gland.

The protein resides in the secreted. Its function is as follows. Interferes with one step of hemostasis (modulation of platelet aggregation, or coagulation cascade, for example). The chain is Snaclec B1 from Macrovipera lebetinus (Levantine viper).